Here is a 357-residue protein sequence, read N- to C-terminus: Type II methyltransferase M1.HgaI (357 aa).

The SAM-dependent MTase C5-type domain maps to I5–N357. C83 is a catalytic residue.

It belongs to the class I-like SAM-binding methyltransferase superfamily. C5-methyltransferase family.

It catalyses the reaction a 2'-deoxycytidine in DNA + S-adenosyl-L-methionine = a 5-methyl-2'-deoxycytidine in DNA + S-adenosyl-L-homocysteine + H(+). A methylase that recognizes DNA with the sequence 5'-GCGTC-3', methylates C-2, and protects the DNA from cleavage by the HgaI endonuclease. This chain is Type II methyltransferase M1.HgaI (hgaIAM), found in Avibacterium volantium (Pasteurella volantium).